The following is a 316-amino-acid chain: Oligopeptide transport system permease protein AppB (316 aa).

6 helical membrane-spanning segments follow: residues 10-30 (LMSI…MKAA), 100-120 (LLLM…FGVL), 138-158 (FIGL…VLSV), 177-197 (IFDR…ADMA), 240-260 (LPVI…SVVV), and 290-310 (VISA…YAIV). In terms of domain architecture, ABC transmembrane type-1 spans 96–303 (LPNTLLLMLV…VLVVVGNLIA (208 aa)).

The protein belongs to the binding-protein-dependent transport system permease family. OppBC subfamily.

Its subcellular location is the cell membrane. Its function is as follows. This protein is a component of an oligopeptide permease, a binding protein-dependent transport system. This APP system can completely substitute for the OPP system in both sporulation and genetic competence, though, unlike OPP, is incapable of transporting tripeptides. Probably responsible for the translocation of the substrate across the membrane. This Bacillus subtilis (strain 168) protein is Oligopeptide transport system permease protein AppB (appB).